The primary structure comprises 261 residues: Caveolae-associated protein 3 (261 aa).

Residues M1–K84 form an interaction with CAVIN1 region. A leucine-zipper region spans residues V20 to L78. 2 positions are modified to phosphoserine: S62 and S70. Residue K128 forms a Glycyl lysine isopeptide (Lys-Gly) (interchain with G-Cter in SUMO2) linkage. Residues A135–P203 form an interaction with CAV1 region. Residues Q139–A261 are disordered. Over residues L158–P170 the composition is skewed to acidic residues. S165, S166, and S173 each carry phosphoserine. Residues A200 to L212 show a composition bias toward pro residues. The segment covering G213–T231 has biased composition (low complexity).

It belongs to the CAVIN family. In terms of assembly, component of the CAVIN complex composed of CAVIN1, CAVIN2, CAVIN3 and CAVIN4. Interacts with PRKCD and with phosphatidylserine. Phosphatidylserine may form a bridge between PKC and PKC-binding partners and stabilize the binding. Interacts with PER2. Interacts with CAVIN1. Interacts (via leucine-zipper domain) with CAV1 in a cholesterol-sensitive manner. Interacts with EPS15L1. Post-translationally, in vitro, phosphorylated by PRKCD. In terms of tissue distribution, skeletal muscle, liver, stomach, lung, kidney and heart (at protein level). Strongly expressed in mammary and epithelial cells.

It localises to the cytoplasm. The protein localises to the membrane. The protein resides in the caveola. It is found in the cytosol. Its function is as follows. Regulates the traffic and/or budding of caveolae. Plays a role in caveola formation in a tissue-specific manner. Required for the formation of caveolae in smooth muscle but not in the lung and heart endothelial cells. Regulates the equilibrium between cell surface-associated and cell surface-dissociated caveolae by promoting the rapid release of caveolae from the cell surface. Plays a role in the regulation of the circadian clock. Modulates the period length and phase of circadian gene expression and also regulates expression and interaction of the core clock components PER1/2 and CRY1/2. The protein is Caveolae-associated protein 3 of Homo sapiens (Human).